We begin with the raw amino-acid sequence, 361 residues long: tRNA 2-selenouridine synthase (361 aa).

The region spanning 11–134 is the Rhodanese domain; the sequence is LLADTPLIDV…LRQTAIQATW (124 aa). The S-selanylcysteine intermediate role is filled by Cys-94.

The protein belongs to the SelU family. Monomer.

It catalyses the reaction 5-methylaminomethyl-2-thiouridine(34) in tRNA + selenophosphate + (2E)-geranyl diphosphate + H2O + H(+) = 5-methylaminomethyl-2-selenouridine(34) in tRNA + (2E)-thiogeraniol + phosphate + diphosphate. The catalysed reaction is 5-methylaminomethyl-2-thiouridine(34) in tRNA + (2E)-geranyl diphosphate = 5-methylaminomethyl-S-(2E)-geranyl-thiouridine(34) in tRNA + diphosphate. The enzyme catalyses 5-methylaminomethyl-S-(2E)-geranyl-thiouridine(34) in tRNA + selenophosphate + H(+) = 5-methylaminomethyl-2-(Se-phospho)selenouridine(34) in tRNA + (2E)-thiogeraniol. It carries out the reaction 5-methylaminomethyl-2-(Se-phospho)selenouridine(34) in tRNA + H2O = 5-methylaminomethyl-2-selenouridine(34) in tRNA + phosphate. Its function is as follows. Involved in the post-transcriptional modification of the uridine at the wobble position (U34) of tRNA(Lys), tRNA(Glu) and tRNA(Gln). Catalyzes the conversion of 2-thiouridine (S2U-RNA) to 2-selenouridine (Se2U-RNA). Acts in a two-step process involving geranylation of 2-thiouridine (S2U) to S-geranyl-2-thiouridine (geS2U) and subsequent selenation of the latter derivative to 2-selenouridine (Se2U) in the tRNA chain. The polypeptide is tRNA 2-selenouridine synthase (Salmonella schwarzengrund (strain CVM19633)).